The following is a 20-amino-acid chain: Cytochrome c oxidase subunit 7B-liver, mitochondrial (20 aa).

The protein belongs to the cytochrome c oxidase VIIb family. As to quaternary structure, component of the cytochrome c oxidase (complex IV, CIV), a multisubunit enzyme composed of 14 subunits. The complex is composed of a catalytic core of 3 subunits MT-CO1, MT-CO2 and MT-CO3, encoded in the mitochondrial DNA, and 11 supernumerary subunits COX4I, COX5A, COX5B, COX6A, COX6B, COX6C, COX7A, COX7B, COX7C, COX8 and NDUFA4, which are encoded in the nuclear genome. The complex exists as a monomer or a dimer and forms supercomplexes (SCs) in the inner mitochondrial membrane with NADH-ubiquinone oxidoreductase (complex I, CI) and ubiquinol-cytochrome c oxidoreductase (cytochrome b-c1 complex, complex III, CIII), resulting in different assemblies (supercomplex SCI(1)III(2)IV(1) and megacomplex MCI(2)III(2)IV(2)).

It localises to the mitochondrion inner membrane. It carries out the reaction 4 Fe(II)-[cytochrome c] + O2 + 8 H(+)(in) = 4 Fe(III)-[cytochrome c] + 2 H2O + 4 H(+)(out). The protein operates within energy metabolism; oxidative phosphorylation. Functionally, component of the cytochrome c oxidase, the last enzyme in the mitochondrial electron transport chain which drives oxidative phosphorylation. The respiratory chain contains 3 multisubunit complexes succinate dehydrogenase (complex II, CII), ubiquinol-cytochrome c oxidoreductase (cytochrome b-c1 complex, complex III, CIII) and cytochrome c oxidase (complex IV, CIV), that cooperate to transfer electrons derived from NADH and succinate to molecular oxygen, creating an electrochemical gradient over the inner membrane that drives transmembrane transport and the ATP synthase. Cytochrome c oxidase is the component of the respiratory chain that catalyzes the reduction of oxygen to water. Electrons originating from reduced cytochrome c in the intermembrane space (IMS) are transferred via the dinuclear copper A center (CU(A)) of subunit 2 and heme A of subunit 1 to the active site in subunit 1, a binuclear center (BNC) formed by heme A3 and copper B (CU(B)). The BNC reduces molecular oxygen to 2 water molecules using 4 electrons from cytochrome c in the IMS and 4 protons from the mitochondrial matrix. In Thunnus obesus (Bigeye tuna), this protein is Cytochrome c oxidase subunit 7B-liver, mitochondrial.